Reading from the N-terminus, the 155-residue chain is UPF0260 protein R01011 (155 aa).

This sequence belongs to the UPF0260 family.

The polypeptide is UPF0260 protein R01011 (Rhizobium meliloti (strain 1021) (Ensifer meliloti)).